An 88-amino-acid chain; its full sequence is Exodeoxyribonuclease 7 small subunit (88 aa).

The disordered stretch occupies residues 68–88 (SDPMHPDDGEPFDPSLVSTSQ).

Belongs to the XseB family. In terms of assembly, heterooligomer composed of large and small subunits.

It is found in the cytoplasm. The catalysed reaction is Exonucleolytic cleavage in either 5'- to 3'- or 3'- to 5'-direction to yield nucleoside 5'-phosphates.. Its function is as follows. Bidirectionally degrades single-stranded DNA into large acid-insoluble oligonucleotides, which are then degraded further into small acid-soluble oligonucleotides. In Xylella fastidiosa (strain 9a5c), this protein is Exodeoxyribonuclease 7 small subunit.